Reading from the N-terminus, the 424-residue chain is 3-oxo-tetronate kinase (424 aa).

Residues Ser264, 363–366, and Gly408 contribute to the ATP site; that span reads GGET.

This sequence belongs to the four-carbon acid sugar kinase family.

It catalyses the reaction 3-dehydro-L-erythronate + ATP = 3-dehydro-4-O-phospho-L-erythronate + ADP + H(+). It carries out the reaction 3-dehydro-D-erythronate + ATP = 3-dehydro-4-O-phospho-D-erythronate + ADP + H(+). In terms of biological role, catalyzes the ATP-dependent phosphorylation of 3-oxo-tetronate to 3-oxo-tetronate 4-phosphate. The chain is 3-oxo-tetronate kinase from Methylobacterium radiotolerans (strain ATCC 27329 / DSM 1819 / JCM 2831 / NBRC 15690 / NCIMB 10815 / 0-1).